The following is a 293-amino-acid chain: Probable aspartoacylase (293 aa).

Zn(2+) is bound by residues H14 and E17. Substrate is bound by residues R56 and 63–64 (NR). A Zn(2+)-binding site is contributed by H106. 2 residues coordinate substrate: E165 and Y276.

This sequence belongs to the AspA/AstE family. Aspartoacylase subfamily. The cofactor is Zn(2+).

It catalyses the reaction an N-acyl-L-aspartate + H2O = a carboxylate + L-aspartate. This chain is Probable aspartoacylase, found in Trichodesmium erythraeum (strain IMS101).